We begin with the raw amino-acid sequence, 465 residues long: BTB/POZ and MATH domain-containing protein 4 (465 aa).

The interval L12–S40 is disordered. An MATH domain is found at N46 to V180. The region spanning S216–A282 is the BTB domain. Disordered regions lie at residues S395–G429 and V441–D465. Residues N442–D458 are compositionally biased toward low complexity.

This sequence belongs to the Tdpoz family. Interacts with RAP2-4. Binds to MYB56 at the promoter of FLOWERING LOCUS T (FT). Ubiquitous.

The protein resides in the cytoplasm. The protein operates within protein modification; protein ubiquitination. Its function is as follows. May act as a substrate-specific adapter of an E3 ubiquitin-protein ligase complex (CUL3-RBX1-BTB) which mediates the ubiquitination and subsequent proteasomal degradation of target proteins. The polypeptide is BTB/POZ and MATH domain-containing protein 4 (BPM4) (Arabidopsis thaliana (Mouse-ear cress)).